We begin with the raw amino-acid sequence, 627 residues long: Interferon-induced GTP-binding protein MxB (627 aa).

The Dynamin-type G domain maps to 34-307; that stretch reads DLALPAIAVI…LVHHIQRSLP (274 aa). Residues 44–51 are G1 motif; the sequence is GDQSSGKS. 44–51 contacts GTP; it reads GDQSSGKS. Residues 69-71 are G2 motif; the sequence is VTR. The tract at residues 145–148 is G3 motif; the sequence is DLPG. Residues 145–149 and 214–217 each bind GTP; these read DLPGI and TKPD. A G4 motif region spans residues 214 to 217; that stretch reads TKPD. The interval 246-249 is G5 motif; the sequence is RCRG. In terms of domain architecture, GED spans 541–627; sequence LSEMKLHLES…MKAQNLLATY (87 aa).

Belongs to the TRAFAC class dynamin-like GTPase superfamily. Dynamin/Fzo/YdjA family.

It localises to the cytoplasm. The sequence is that of Interferon-induced GTP-binding protein MxB (mxb) from Danio rerio (Zebrafish).